A 341-amino-acid polypeptide reads, in one-letter code: tRNA N6-adenosine threonylcarbamoyltransferase (341 aa).

Fe cation contacts are provided by His117 and His121. Residues 139–143 (VVSGG), Asp172, Gly185, Asp189, and Asn278 each bind substrate. Asp307 provides a ligand contact to Fe cation.

This sequence belongs to the KAE1 / TsaD family. Requires Fe(2+) as cofactor.

It localises to the cytoplasm. The enzyme catalyses L-threonylcarbamoyladenylate + adenosine(37) in tRNA = N(6)-L-threonylcarbamoyladenosine(37) in tRNA + AMP + H(+). Functionally, required for the formation of a threonylcarbamoyl group on adenosine at position 37 (t(6)A37) in tRNAs that read codons beginning with adenine. Is involved in the transfer of the threonylcarbamoyl moiety of threonylcarbamoyl-AMP (TC-AMP) to the N6 group of A37, together with TsaE and TsaB. TsaD likely plays a direct catalytic role in this reaction. The protein is tRNA N6-adenosine threonylcarbamoyltransferase of Bacillus licheniformis (strain ATCC 14580 / DSM 13 / JCM 2505 / CCUG 7422 / NBRC 12200 / NCIMB 9375 / NCTC 10341 / NRRL NRS-1264 / Gibson 46).